Reading from the N-terminus, the 1358-residue chain is Indole-3-acetaldehyde oxidase (1358 aa).

The region spanning 11–98 is the 2Fe-2S ferredoxin-type domain; it reads STVVLAVNGK…RCSVTTSEGI (88 aa). 3 residues coordinate [2Fe-2S] cluster: cysteine 50, cysteine 55, and cysteine 58. An FAD-binding PCMH-type domain is found at 241–419; that stretch reads IAASGDGWYH…LSIFIPEWGS (179 aa). Positions 532 to 559 are disordered; the sequence is SSAPSNIDTPNGSYTHETGSNVDSPERH. Over residues 537 to 554 the composition is skewed to polar residues; that stretch reads NIDTPNGSYTHETGSNVD.

Belongs to the xanthine dehydrogenase family. As to quaternary structure, aldehyde oxidases (AO) are homodimers and heterodimers of AO subunits. [2Fe-2S] cluster serves as cofactor. It depends on FAD as a cofactor. The cofactor is Mo-molybdopterin. Mostly expressed in roots, and, to a lower extent, in mesocotyl, leaves and coleoptile. Accumulates in apical region of maize coleoptiles (at protein level).

It is found in the cytoplasm. It catalyses the reaction indole-3-acetaldehyde + O2 + H2O = (indol-3-yl)acetate + H2O2 + H(+). With respect to regulation, inhibited by 2-mercaptoethanol, p-chloromercuribenzoate, and iodoacetate. Its function is as follows. In higher plants aldehyde oxidases (AO) appear to be homo- and heterodimeric assemblies of AO subunits with probably different physiological functions. Involved in the biosynthesis of auxin from (indol-3-yl)acetaldehyde. Can also use indole-3-aldehyde and benzaldehyde as substrate. This is Indole-3-acetaldehyde oxidase (AO1) from Zea mays (Maize).